Consider the following 223-residue polypeptide: Coiled-coil domain-containing protein 70 (223 aa).

A coiled-coil region spans residues 129–153 (NALWERDRNLLQEDKALWEEEKALW). Residues 199-223 (EQRHQNGPYNANEEPQSTSFPRGRA) form a disordered region. A compositionally biased stretch (polar residues) spans 203–223 (QNGPYNANEEPQSTSFPRGRA).

This Mus musculus (Mouse) protein is Coiled-coil domain-containing protein 70.